A 312-amino-acid chain; its full sequence is Malate dehydrogenase (312 aa).

NAD(+) contacts are provided by residues 12–17 (GAGFTG) and Asp36. Arg87 and Arg93 together coordinate substrate. Residues Asn100 and 123–125 (LTN) each bind NAD(+). Position 125 (Asn125) interacts with substrate. Phosphoserine is present on Ser149. Arg156 lines the substrate pocket. The active-site Proton acceptor is His180.

It belongs to the LDH/MDH superfamily. MDH type 3 family.

It catalyses the reaction (S)-malate + NAD(+) = oxaloacetate + NADH + H(+). Functionally, catalyzes the reversible oxidation of malate to oxaloacetate. This is Malate dehydrogenase from Bacillus mycoides (strain KBAB4) (Bacillus weihenstephanensis).